The primary structure comprises 27 residues: CD59 glycoprotein (27 aa).

2 disulfide bridges follow: Cys-3-Cys-25 and Cys-6-Cys-12. N-linked (GlcNAc...) asparagine glycosylation is present at Asn-17.

As to quaternary structure, interacts with T-cell surface antigen CD2. N- and O-glycosylated. In terms of tissue distribution, expressed in erythrocytes and lymphocytes. Not detected in platelets.

Its subcellular location is the cell membrane. It localises to the secreted. Functionally, potent inhibitor of the complement membrane attack complex (MAC) action, which protects self-cells from damage during complement activation. Acts by binding to the beta-haipins of C8 (C8A and C8B) components of the assembling MAC, forming an intermolecular beta-sheet that prevents incorporation of the multiple copies of C9 required for complete formation of the osmolytic pore. The chain is CD59 glycoprotein from Ovis aries (Sheep).